Consider the following 254-residue polypeptide: 4-hydroxy-tetrahydrodipicolinate reductase (254 aa).

NAD(+) is bound by residues 8–13, Asp35, 86–88, and 110–113; these read GCSGKM, CST, and SANM. Catalysis depends on His143, which acts as the Proton donor/acceptor. His144 provides a ligand contact to (S)-2,3,4,5-tetrahydrodipicolinate. Residue Lys147 is the Proton donor of the active site. 153–154 is a (S)-2,3,4,5-tetrahydrodipicolinate binding site; that stretch reads GT.

Belongs to the DapB family.

Its subcellular location is the cytoplasm. The catalysed reaction is (S)-2,3,4,5-tetrahydrodipicolinate + NAD(+) + H2O = (2S,4S)-4-hydroxy-2,3,4,5-tetrahydrodipicolinate + NADH + H(+). It catalyses the reaction (S)-2,3,4,5-tetrahydrodipicolinate + NADP(+) + H2O = (2S,4S)-4-hydroxy-2,3,4,5-tetrahydrodipicolinate + NADPH + H(+). Its pathway is amino-acid biosynthesis; L-lysine biosynthesis via DAP pathway; (S)-tetrahydrodipicolinate from L-aspartate: step 4/4. Catalyzes the conversion of 4-hydroxy-tetrahydrodipicolinate (HTPA) to tetrahydrodipicolinate. The polypeptide is 4-hydroxy-tetrahydrodipicolinate reductase (Clostridium perfringens (strain SM101 / Type A)).